The chain runs to 119 residues: ATP-dependent Clp protease adapter protein ClpS (119 aa).

Residues 1–24 form a disordered region; it reads MGPESPDSIPPHGPGNGDGDQDLD.

It belongs to the ClpS family. In terms of assembly, binds to the N-terminal domain of the chaperone ClpA.

Its function is as follows. Involved in the modulation of the specificity of the ClpAP-mediated ATP-dependent protein degradation. The chain is ATP-dependent Clp protease adapter protein ClpS from Gluconobacter oxydans (strain 621H) (Gluconobacter suboxydans).